The chain runs to 92 residues: Small ribosomal subunit protein uS19c (92 aa).

Belongs to the universal ribosomal protein uS19 family.

It localises to the plastid. Protein S19 forms a complex with S13 that binds strongly to the 16S ribosomal RNA. This is Small ribosomal subunit protein uS19c from Aneura mirabilis (Parasitic liverwort).